A 488-amino-acid polypeptide reads, in one-letter code: Annexin A7 (488 aa).

The segment covering 1–18 (MSYPGYPPTGYPPFPGYP) has biased composition (pro residues). Disordered stretches follow at residues 1–49 (MSYP…YPQV) and 71–150 (GYPG…NTES). A repeat-rich region region spans residues 1–143 (MSYPGYPPTG…QYPGGQPTYP (143 aa)). A 3 X 5 AA tandem repeats of G-Y-P-P-X region spans residues 5–20 (GYPPTGYPPFPGYPPA). A compositionally biased stretch (gly residues) spans 89–102 (PGQGFGVPPGGAGF). Annexin repeat units follow at residues 185-256 (FDAM…ALFM), 257-328 (PPTY…SMCQ), 340-412 (QMAQ…TILQ), and 416-487 (NRPA…AIVG). An N6-acetyllysine modification is found at Lys233.

The protein belongs to the annexin family. Interacts with PDCD6.

Functionally, calcium/phospholipid-binding protein which promotes membrane fusion and is involved in exocytosis. This is Annexin A7 (ANXA7) from Macaca fascicularis (Crab-eating macaque).